A 240-amino-acid chain; its full sequence is 1-(5-phosphoribosyl)-5-[(5-phosphoribosylamino)methylideneamino] imidazole-4-carboxamide isomerase (240 aa).

The active-site Proton acceptor is Asp-8. The Proton donor role is filled by Asp-129.

Belongs to the HisA/HisF family.

It localises to the cytoplasm. The catalysed reaction is 1-(5-phospho-beta-D-ribosyl)-5-[(5-phospho-beta-D-ribosylamino)methylideneamino]imidazole-4-carboxamide = 5-[(5-phospho-1-deoxy-D-ribulos-1-ylimino)methylamino]-1-(5-phospho-beta-D-ribosyl)imidazole-4-carboxamide. It functions in the pathway amino-acid biosynthesis; L-histidine biosynthesis; L-histidine from 5-phospho-alpha-D-ribose 1-diphosphate: step 4/9. This is 1-(5-phosphoribosyl)-5-[(5-phosphoribosylamino)methylideneamino] imidazole-4-carboxamide isomerase from Listeria monocytogenes serotype 4b (strain F2365).